The following is a 1801-amino-acid chain: Laminin subunit beta-2 (1801 aa).

The first 35 residues, 1-35 (MEWASGKPGRGRQGQPVPWELRLGLLLSVLAATLA), serve as a signal peptide directing secretion. Residues 46-285 (SRGSCYPATG…ALYELVIRGN (240 aa)) enclose the Laminin N-terminal domain. N251 carries an N-linked (GlcNAc...) asparagine glycan. Disulfide bonds link C286/C295, C288/C313, C315/C324, C327/C347, C350/C359, C352/C377, C380/C389, C392/C410, C413/C426, C415/C441, C443/C452, C455/C470, C473/C487, C475/C494, C496/C505, C508/C522, C525/C537, C527/C544, and C546/C555. Laminin EGF-like domains follow at residues 286 to 349 (CFCY…ACRK), 350 to 412 (CECN…ACRP), 413 to 472 (CDCD…GCQR), and 473 to 524 (CQCN…GCRP). N371 carries N-linked (GlcNAc...) asparagine glycosylation. One can recognise a Laminin EGF-like 5; truncated domain in the interval 525–555 (CDCDVGGALDPQCDEATGQCPCRPHMIGRRC). In terms of domain architecture, Laminin IV type B spans 564 to 780 (RPFLDHLTWE…LLISASSLVY (217 aa)). Disulfide bonds link C786–C798, C788–C805, C807–C816, C819–C831, C834–C846, C836–C853, C855–C864, C867–C877, C880–C889, C882–C896, C899–C908, C911–C927, C930–C946, C932–C957, C959–C968, C971–C986, C989–C1003, C991–C1010, C1013–C1022, C1025–C1038, C1041–C1061, C1043–C1068, C1070–C1079, C1082–C1095, C1098–C1110, C1100–C1117, C1119–C1128, C1131–C1143, C1146–C1158, C1148–C1165, C1167–C1176, and C1179–C1190. Laminin EGF-like domains are found at residues 786 to 833 (CQCD…GCQA), 834 to 879 (CQCS…NCRP), 880 to 929 (CVCN…QCRP), 930 to 988 (CPCP…RCQL), 989 to 1040 (CECS…SCHR), 1041 to 1097 (CTCN…GCQP), 1098 to 1145 (CACH…QCRA), and 1146 to 1192 (CDCD…ACHP). N1088 carries N-linked (GlcNAc...) asparagine glycosylation. The tract at residues 1193–1412 (CHACFGDWDR…LSLTGVNELV (220 aa)) is domain II. Residue N1252 is glycosylated (N-linked (GlcNAc...) asparagine). The stretch at 1259–1306 (AKLVEATEGLRHEIGKTTERLTQLEAELTDVQDENFNANHALSGLERD) forms a coiled coil. N1311 and N1351 each carry an N-linked (GlcNAc...) asparagine glycan. Positions 1413 to 1445 (CGAPGDAPCATSPCGGAGCRDEDGQPRCGGLGC) are domain alpha. The domain I stretch occupies residues 1446-1801 (SGAAATADLA…LQVQIYNTCQ (356 aa)). Residues 1475 to 1529 (GILSRVSETRRQAEEAQQRAQAALDKANASRGQVEQANQELRELIQNVKDFLSQE) are a coiled coil. N1502 is a glycosylation site (N-linked (GlcNAc...) asparagine). S1535 is subject to Phosphoserine. The stretch at 1576–1793 (LAHTMGDVRR…RSVLQAINLQ (218 aa)) forms a coiled coil. Positions 1684 to 1694 (ASTAEETAGSA) are enriched in low complexity. The segment at 1684–1703 (ASTAEETAGSAQSRAREAEK) is disordered.

As to quaternary structure, laminin is a complex glycoprotein, consisting of three different polypeptide chains (alpha, beta, gamma), which are bound to each other by disulfide bonds into a cross-shaped molecule comprising one long and three short arms with globules at each end. Beta-2 is a subunit of laminin-3 (laminin-121 or S-laminin), laminin-4 (laminin-221 or S-merosin), laminin-7 (laminin-321 or KS-laminin), laminin-9 (laminin-421), laminin-11 (laminin-521), laminin-14 (laminin-423) and laminin-15 (laminin-523). In terms of tissue distribution, found in the basement membranes (major component). S-laminin is concentrated in the synaptic cleft of the neuromuscular junction.

Its subcellular location is the secreted. The protein resides in the extracellular space. It localises to the extracellular matrix. The protein localises to the basement membrane. In terms of biological role, binding to cells via a high affinity receptor, laminin is thought to mediate the attachment, migration and organization of cells into tissues during embryonic development by interacting with other extracellular matrix components. The polypeptide is Laminin subunit beta-2 (Lamb2) (Rattus norvegicus (Rat)).